A 354-amino-acid chain; its full sequence is MESALALPRLPPHDPGTPVLSVVDMHTGGEPLRIVLAGCPEVSGPTLLAKRRYMRQHLDHVRRRLMFEPRGHRDMYGAVLVPSELPDAHLGVLFLHNEGYSSMCGHAVLALGRFALDFGLVPATPAGTREARVNIHCPCGLVTAFVACEDGRSHGPVRFHSVPAFVLATDLMVDVPGHGKVVVDIAYGGAFYAFVTAEKLGLDICSAKTRDLVDAASAVTKAVKAQFKINHPDSEDLAFLYGTILTDGKDAYTKEPTTNICVFADEQVDRSPTGSGVIARIALQYHKGLLELNQTRAFKSSATGSVFTGKAVREAKCGDFKAVIVEVSGQAHYTGTASFIVEDDDPLRDGFLLK.

Catalysis depends on Cys-104, which acts as the Proton acceptor. Substrate-binding positions include 105-106 (GH), Asp-269, and 274-275 (GS).

It belongs to the proline racemase family. As to quaternary structure, homodimer.

It carries out the reaction trans-3-hydroxy-L-proline = 1-pyrroline-2-carboxylate + H2O. Its function is as follows. Catalyzes the dehydration of trans-3-hydroxy-L-proline to delta-1-pyrroline-2-carboxylate (Pyr2C). The polypeptide is Trans-L-3-hydroxyproline dehydratase (L3HYPDH) (Pongo abelii (Sumatran orangutan)).